We begin with the raw amino-acid sequence, 1373 residues long: Disease resistance protein RRS1 (1373 aa).

The 142-residue stretch at 5-146 (EKDEEFVCIS…EIVRDVYETH (142 aa)) folds into the TIR domain. Positions 170-421 (IGIRCVGIWG…LLEGCGFFPH (252 aa)) constitute an NB-ARC domain. Position 179–186 (179–186 (GMPGIGKT)) interacts with ATP. LRR repeat units follow at residues 498–522 (SEEI…AFKN), 535–553 (NPEV…HSLP), 554–575 (NELR…NFDP), 577–598 (HLVE…TKNL), 621–646 (AENL…RLLR), 665–688 (PPNI…TVKP), 742–766 (LPNM…SIQG), 768–793 (PRFL…SLEI), and 831–854 (PRNL…PLSL). A Nuclear localization signal motif is present at residues 988-1005 (RNFHCWAPGKVVPKVRKD). Positions 1204-1272 (IPAIDEGDLW…YLSEHNHPRP (69 aa)) form a DNA-binding region, WRKY. Positions 1300 to 1323 (RVFQNKDEPNKPHLPSSSTPPGNA) are disordered.

As to quaternary structure, interacts with PopP2, a R.solanacearum type III effector.

The protein resides in the nucleus. In terms of biological role, transcription factor. Interacts specifically with the W box (5'-(T)TGAC[CT]-3'), a frequently occurring elicitor-responsive cis-acting element. Also acts as a disease resistance protein involved in resistance to fungal and bacterial pathogens, including R.solanacearum, P.syringae pv. tomato and C.higginsianum. In presence of RPS4, elicites an EDS1-dependent hypersensitive response. This chain is Disease resistance protein RRS1, found in Arabidopsis thaliana (Mouse-ear cress).